The sequence spans 469 residues: Ribulose bisphosphate carboxylase large chain (469 aa).

At Lys-5 the chain carries N6,N6,N6-trimethyllysine. 2 residues coordinate substrate: Asn-114 and Thr-164. Lys-166 serves as the catalytic Proton acceptor. Lys-168 contacts substrate. Mg(2+) contacts are provided by Lys-192, Asp-194, and Glu-195. Position 192 is an N6-carboxylysine (Lys-192). The active-site Proton acceptor is His-285. Residues Arg-286, His-318, and Ser-370 each coordinate substrate.

This sequence belongs to the RuBisCO large chain family. Type I subfamily. In terms of assembly, heterohexadecamer of 8 large chains and 8 small chains; disulfide-linked. The disulfide link is formed within the large subunit homodimers. Mg(2+) is required as a cofactor. In terms of processing, the disulfide bond which can form in the large chain dimeric partners within the hexadecamer appears to be associated with oxidative stress and protein turnover.

It is found in the plastid. It localises to the chloroplast. The catalysed reaction is 2 (2R)-3-phosphoglycerate + 2 H(+) = D-ribulose 1,5-bisphosphate + CO2 + H2O. It catalyses the reaction D-ribulose 1,5-bisphosphate + O2 = 2-phosphoglycolate + (2R)-3-phosphoglycerate + 2 H(+). Functionally, ruBisCO catalyzes two reactions: the carboxylation of D-ribulose 1,5-bisphosphate, the primary event in carbon dioxide fixation, as well as the oxidative fragmentation of the pentose substrate in the photorespiration process. Both reactions occur simultaneously and in competition at the same active site. In Antirhea lucida (Palo iloron), this protein is Ribulose bisphosphate carboxylase large chain.